The chain runs to 154 residues: Aspartate carbamoyltransferase regulatory chain (154 aa).

Zn(2+) contacts are provided by C109, C114, C138, and C141.

This sequence belongs to the PyrI family. As to quaternary structure, contains catalytic and regulatory chains. Zn(2+) is required as a cofactor.

Involved in allosteric regulation of aspartate carbamoyltransferase. The protein is Aspartate carbamoyltransferase regulatory chain of Aliivibrio salmonicida (strain LFI1238) (Vibrio salmonicida (strain LFI1238)).